The primary structure comprises 471 residues: GDP-mannose transporter (471 aa).

Positions 1–13 (MSSGSRSFFTPQE) are enriched in polar residues. The interval 1–52 (MSSGSRSFFTPQETRLELPQGAAHQTPDITRPASPSENDRAPFLNGGPSDAR) is disordered. The Cytoplasmic segment spans residues 1–70 (MSSGSRSFFT…ALRNDSEKPA (70 aa)). A helical membrane pass occupies residues 71-91 (VGIMALAPILCYCAASITMTV). Topologically, residues 92–101 (VNKFTVSGRG) are lumenal. The helical transmembrane segment at 102-122 (FNMNLLVLLIQSTVGVTCVWI) threads the bilayer. Topologically, residues 123–139 (AERAGLIQLRGLNAKDA) are cytoplasmic. A helical membrane pass occupies residues 140 to 160 (WNWMPLSIMLVFVIWTGSKAL). The Lumenal portion of the chain corresponds to 161-166 (QYLNIS). A glycan (N-linked (GlcNAc...) asparagine) is linked at Asn-164. Residues 167 to 187 (VYTIFKNLTIILIAYGEVMWF) form a helical membrane-spanning segment. At 188–193 (GGRVTR) the chain is on the cytoplasmic side. Residues 194–214 (IVLCSFLFMVLSSVIAAWSDI) traverse the membrane as a helical segment. Residues 215 to 279 (SNVFAIGNLS…DVIEGFQGYG (65 aa)) are Lumenal-facing. A glycan (N-linked (GlcNAc...) asparagine) is linked at Asn-222. A helical membrane pass occupies residues 280–300 (LLSSGYVWMALNCICSATYVL). Residues 301 to 315 (LMRKRIKVTGFKDWD) are Cytoplasmic-facing. Residues 316–336 (TMFYNNFLSIPVLLLMSFLVE) traverse the membrane as a helical segment. Over 337–354 (DWSYANLHKNFPDDKQTK) the chain is Lumenal. The chain crosses the membrane as a helical span at residues 355–375 (LISAIVFSGACAILISYTTAW). Residues 376-383 (CIRATSST) are Cytoplasmic-facing. The helical transmembrane segment at 384–404 (TYSMVGALNKLPVALSGMVFF) threads the bilayer. At 405–408 (HDPP) the chain is on the lumenal side. A helical membrane pass occupies residues 409–429 (VTFSSVSAIAVGFFAGLVYAF). Topologically, residues 430–471 (GKNKQAEAAKLGGHASANGSSSMSGSKDGSSLPMHTFNDRKD) are cytoplasmic. Residues 442–460 (GHASANGSSSMSGSKDGSS) show a composition bias toward low complexity. The tract at residues 442 to 471 (GHASANGSSSMSGSKDGSSLPMHTFNDRKD) is disordered.

Belongs to the TPT transporter family. SLC35D subfamily. In terms of assembly, homooligomer.

The protein localises to the golgi apparatus membrane. The protein resides in the cytoplasmic vesicle membrane. It localises to the endoplasmic reticulum membrane. Functionally, involved in the import of GDP-mannose from the cytoplasm into the Golgi lumen. The chain is GDP-mannose transporter (VRG4) from Mycosarcoma maydis (Corn smut fungus).